The sequence spans 382 residues: Histidinol-phosphate aminotransferase (382 aa).

Position 215 is an N6-(pyridoxal phosphate)lysine (K215). Positions 363 to 382 (NIDNQSKTHSQTSSIRKGTI) are disordered.

It belongs to the class-II pyridoxal-phosphate-dependent aminotransferase family. Histidinol-phosphate aminotransferase subfamily. As to quaternary structure, homodimer. The cofactor is pyridoxal 5'-phosphate.

The catalysed reaction is L-histidinol phosphate + 2-oxoglutarate = 3-(imidazol-4-yl)-2-oxopropyl phosphate + L-glutamate. It participates in amino-acid biosynthesis; L-histidine biosynthesis; L-histidine from 5-phospho-alpha-D-ribose 1-diphosphate: step 7/9. This chain is Histidinol-phosphate aminotransferase, found in Yersinia pseudotuberculosis serotype O:3 (strain YPIII).